The chain runs to 227 residues: Ribose-5-phosphate isomerase A (227 aa).

Substrate contacts are provided by residues 26-29, 82-85, and 95-98; these read TGST, DGAD, and KGGG. Catalysis depends on Glu104, which acts as the Proton acceptor. Residue Lys122 participates in substrate binding.

Belongs to the ribose 5-phosphate isomerase family. In terms of assembly, homodimer.

It carries out the reaction aldehydo-D-ribose 5-phosphate = D-ribulose 5-phosphate. It participates in carbohydrate degradation; pentose phosphate pathway; D-ribose 5-phosphate from D-ribulose 5-phosphate (non-oxidative stage): step 1/1. Its function is as follows. Catalyzes the reversible conversion of ribose-5-phosphate to ribulose 5-phosphate. The sequence is that of Ribose-5-phosphate isomerase A from Streptococcus pneumoniae (strain ATCC 700669 / Spain 23F-1).